Consider the following 372-residue polypeptide: Homeobox protein Nkx-2.1 (372 aa).

The homeobox DNA-binding region spans 161-220; that stretch reads RRKRRVLFSQAQVYELERRFKQQKYLSAPEREHLASMIHLTPTQVKIWFQNHRYKMKRQA. Disordered stretches follow at residues 219–258, 269–288, and 312–340; these read QAKD…SPRR, KPCQ…SHAQ, and AGLG…SPAG. Positions 233–244 are enriched in gly residues; the sequence is SGGGGGGGGGAG. The span at 245 to 254 shows a compositional bias: low complexity; the sequence is CPQQQQAQQQ. S255 carries the post-translational modification Phosphoserine. Residues 273–288 show a composition bias toward low complexity; sequence AGAPAPGAASLQSHAQ.

Belongs to the NK-2 homeobox family. As to quaternary structure, interacts with WWTR1. In terms of processing, phosphorylated on serine residues by STK3/MST2. Thyroid, lung and brain.

Its subcellular location is the nucleus. Transcription factor that binds and activates the promoter of thyroid specific genes such as thyroglobulin, thyroperoxidase, and thyrotropin receptor. Crucial in the maintenance of the thyroid differentiation phenotype. May play a role in lung development and surfactant homeostasis. Forms a regulatory loop with GRHL2 that coordinates lung epithelial cell morphogenesis and differentiation. Activates the transcription of GNRHR and plays a role in enhancing the circadian oscillation of its gene expression. Represses the transcription of the circadian transcriptional repressor NR1D1. The polypeptide is Homeobox protein Nkx-2.1 (Mus musculus (Mouse)).